The following is a 114-amino-acid chain: Fatty acid-binding protein, liver (114 aa).

This sequence belongs to the calycin superfamily. Fatty-acid binding protein (FABP) family. The N-terminus is blocked.

It is found in the cytoplasm. In terms of biological role, FABPs are thought to play a role in the intracellular transport of long-chain fatty acids and their acyl-CoA esters. This Lethenteron camtschaticum (Japanese lamprey) protein is Fatty acid-binding protein, liver.